Here is a 479-residue protein sequence, read N- to C-terminus: Ribosomal RNA small subunit methyltransferase F (479 aa).

S-adenosyl-L-methionine-binding positions include 125 to 131 (AAAPGSK), glutamate 149, glycine 177, and aspartate 194. Cysteine 247 (nucleophile) is an active-site residue.

It belongs to the class I-like SAM-binding methyltransferase superfamily. RsmB/NOP family.

It localises to the cytoplasm. It catalyses the reaction cytidine(1407) in 16S rRNA + S-adenosyl-L-methionine = 5-methylcytidine(1407) in 16S rRNA + S-adenosyl-L-homocysteine + H(+). Its function is as follows. Specifically methylates the cytosine at position 1407 (m5C1407) of 16S rRNA. The protein is Ribosomal RNA small subunit methyltransferase F of Shigella flexneri serotype 5b (strain 8401).